A 193-amino-acid polypeptide reads, in one-letter code: dTTP/UTP pyrophosphatase (193 aa).

Asp-68 functions as the Proton acceptor in the catalytic mechanism.

This sequence belongs to the Maf family. YhdE subfamily. The cofactor is a divalent metal cation.

It is found in the cytoplasm. The enzyme catalyses dTTP + H2O = dTMP + diphosphate + H(+). The catalysed reaction is UTP + H2O = UMP + diphosphate + H(+). Functionally, nucleoside triphosphate pyrophosphatase that hydrolyzes dTTP and UTP. May have a dual role in cell division arrest and in preventing the incorporation of modified nucleotides into cellular nucleic acids. The polypeptide is dTTP/UTP pyrophosphatase (Ruegeria sp. (strain TM1040) (Silicibacter sp.)).